Reading from the N-terminus, the 621-residue chain is MALLQISEPGMSPAPHQRRLAVGIDLGTTNSLVAAVRSSIPEVLADERGRALLPSVVRYLPDRTAQIGYRAQDEAVRDPKNTIVSVKRFMGRGLRDVANIEHSPYDFVDAPGMVQIKTAAGVKSPVEISAEILATLRQRAEDSLGDDLVGAVITVPAYFDEAQRQATKDAARLAGLEVLRLLNEPTAAAIAYGLDNAAEGIYAVYDLGGGTFDISVLKLTQGVFEVLATGGDSALGGDDFDQRLLCWIVEQANLQPLSAQDMRLLMVRARAAKEALSEADSTVIDAVLESGEIVHLTLTDEIFEQITAHLVQKTLAPVRKALRDAGVGPEEVKGVVLVGGATRMPSIRKAVGDFFGQNPLTNLDPDRVVALGAAMQANLLAGNHAPGEDWLLLDVIPLSLGVETMGGLVEKIIPRNSTIPVARAQEFTTFKDGQTAMAIHVLQGERELASDCRSLARFELRGIPPMVAGAARIRVTYQVDADGLLSVTARETHSGVEASVTVKPSYGLADDDIARMLQDSFREAEHDMKSRALAEERVEADRLVEATQRALETDGDLLSADERAAVEALMATVREIATGEDHLAIRAAVEKLSHGTDEFAARRMDRSIKSALAGRKVQELG.

This sequence belongs to the heat shock protein 70 family.

Functionally, chaperone involved in the maturation of iron-sulfur cluster-containing proteins. Has a low intrinsic ATPase activity which is markedly stimulated by HscB. The protein is Chaperone protein HscA homolog of Cupriavidus taiwanensis (strain DSM 17343 / BCRC 17206 / CCUG 44338 / CIP 107171 / LMG 19424 / R1) (Ralstonia taiwanensis (strain LMG 19424)).